We begin with the raw amino-acid sequence, 432 residues long: Chaperone SurA (432 aa).

Positions 1-26 (MKKIASFCSAAVLIASSFLLNNTVQA) are cleaved as a signal peptide. PpiC domains are found at residues 176-277 (QTEY…KVQD) and 286-386 (VQEV…EVTG).

It localises to the periplasm. The enzyme catalyses [protein]-peptidylproline (omega=180) = [protein]-peptidylproline (omega=0). Its function is as follows. Chaperone involved in the correct folding and assembly of outer membrane proteins. Recognizes specific patterns of aromatic residues and the orientation of their side chains, which are found more frequently in integral outer membrane proteins. May act in both early periplasmic and late outer membrane-associated steps of protein maturation. This Idiomarina loihiensis (strain ATCC BAA-735 / DSM 15497 / L2-TR) protein is Chaperone SurA.